A 361-amino-acid polypeptide reads, in one-letter code: MKILVTGGAGFIGSAVVRHIINNTQDSVVNVDKLTYAGNLESLAEISDSERYSFENADICDAEGDGLYFGQHQLDAVMHLAAESHVDRSITGPAAFIETNIVGTYVLLEAARNYWSGLDDEKKKNFRFHHISTDEVYGDLPHPDEVNSNETLQLFTETTAYAPSSPYSASKASSDHLVRAWKRTYGLPTIVSNCSNNYGPYHFPEKLIPLVILNALEGKALPIYGKGDQIRDWLYVEDHARALYTVVTEGKAGETYNIGGHNEKKNIDVVFTICDLLDEIVPKEKSYREQITYVADRPGHDRRYAIDADKISRELGWKPQETFESGIRKTVEWYLANTNWVENVKSGAYQSWIEQNYEGRQ.

NAD(+)-binding positions include 11 to 12, 32 to 35, 58 to 59, 80 to 84, and T99; these read FI, DKLT, DI, and LAAES. S84 lines the substrate pocket. Residue T133 coordinates substrate. The active-site Proton donor is the D134. Catalysis depends on proton acceptor residues E135 and Y167. 167–171 contacts NAD(+); the sequence is YSASK. Substrate is bound at residue N196. N197 lines the NAD(+) pocket. Residues 206 to 207, 222 to 224, R231, N266, and 296 to 300 contribute to the substrate site; these read KL, PIY, and DRPGH.

It belongs to the NAD(P)-dependent epimerase/dehydratase family. dTDP-glucose dehydratase subfamily. Homodimer. The cofactor is NAD(+).

It carries out the reaction dTDP-alpha-D-glucose = dTDP-4-dehydro-6-deoxy-alpha-D-glucose + H2O. It functions in the pathway carbohydrate biosynthesis; dTDP-L-rhamnose biosynthesis. The protein operates within bacterial outer membrane biogenesis; LPS O-antigen biosynthesis. In terms of biological role, catalyzes the dehydration of dTDP-D-glucose to form dTDP-6-deoxy-D-xylo-4-hexulose via a three-step process involving oxidation, dehydration and reduction. In Escherichia coli, this protein is dTDP-glucose 4,6-dehydratase (rfbB).